A 308-amino-acid chain; its full sequence is Hydroxyacylglutathione hydrolase, mitochondrial (308 aa).

The transit peptide at 1–13 (MVVGRGLLGRRSL) directs the protein to the mitochondrion. The Zn(2+) site is built by H102, H104, D106, and H107. K116 is modified (N6-acetyllysine). Residues H158 and D182 each coordinate Zn(2+). Residues 191–193 (KFY) and 221–223 (HEY) each bind substrate. Residue H221 coordinates Zn(2+). An N6-acetyllysine; alternate modification is found at K229. K229 carries the post-translational modification N6-succinyllysine; alternate. Residue 297-300 (RREK) coordinates substrate.

This sequence belongs to the metallo-beta-lactamase superfamily. Glyoxalase II family. As to quaternary structure, monomer. Zn(2+) serves as cofactor. As to expression, expressed in liver and kidney.

The protein localises to the mitochondrion matrix. It is found in the cytoplasm. It carries out the reaction an S-(2-hydroxyacyl)glutathione + H2O = a 2-hydroxy carboxylate + glutathione + H(+). The catalysed reaction is (R)-S-lactoylglutathione + H2O = (R)-lactate + glutathione + H(+). It functions in the pathway secondary metabolite metabolism; methylglyoxal degradation; (R)-lactate from methylglyoxal: step 2/2. Thiolesterase that catalyzes the hydrolysis of S-D-lactoyl-glutathione to form glutathione and D-lactic acid. The protein is Hydroxyacylglutathione hydrolase, mitochondrial (HAGH) of Homo sapiens (Human).